Consider the following 490-residue polypeptide: Glutamate--tRNA ligase (490 aa).

Positions 13 to 23 match the 'HIGH' region motif; sequence PSPTGTPHVGL. The short motif at 257-261 is the 'KMSKS' region element; that stretch reads KLSKR. An ATP-binding site is contributed by Lys-260.

The protein belongs to the class-I aminoacyl-tRNA synthetase family. Glutamate--tRNA ligase type 1 subfamily. Monomer.

Its subcellular location is the cytoplasm. It carries out the reaction tRNA(Glu) + L-glutamate + ATP = L-glutamyl-tRNA(Glu) + AMP + diphosphate. Functionally, catalyzes the attachment of glutamate to tRNA(Glu) in a two-step reaction: glutamate is first activated by ATP to form Glu-AMP and then transferred to the acceptor end of tRNA(Glu). This Mycobacterium bovis (strain BCG / Pasteur 1173P2) protein is Glutamate--tRNA ligase.